The following is a 359-amino-acid chain: Small ribosomal subunit biogenesis GTPase RsgA (359 aa).

Residues 101-259 enclose the CP-type G domain; the sequence is KRKGSQAIAS…LMDNPGIREV (159 aa). GTP contacts are provided by residues 149–152 and 201–209; these read NKKD and GSSGAGKST. Positions 284, 289, 291, and 297 each coordinate Zn(2+). A disordered region spans residues 331–359; the sequence is DPEEARKKKQKDKQMSKALQKRLKDKGRK. Positions 349–359 are enriched in basic residues; that stretch reads LQKRLKDKGRK.

It belongs to the TRAFAC class YlqF/YawG GTPase family. RsgA subfamily. Monomer. Associates with 30S ribosomal subunit, binds 16S rRNA. The cofactor is Zn(2+).

Its subcellular location is the cytoplasm. One of several proteins that assist in the late maturation steps of the functional core of the 30S ribosomal subunit. Helps release RbfA from mature subunits. May play a role in the assembly of ribosomal proteins into the subunit. Circularly permuted GTPase that catalyzes slow GTP hydrolysis, GTPase activity is stimulated by the 30S ribosomal subunit. The polypeptide is Small ribosomal subunit biogenesis GTPase RsgA (Leptospira interrogans serogroup Icterohaemorrhagiae serovar Lai (strain 56601)).